The sequence spans 236 residues: DNA repair protein RecO (236 aa).

Belongs to the RecO family.

In terms of biological role, involved in DNA repair and RecF pathway recombination. This Haemophilus influenzae (strain 86-028NP) protein is DNA repair protein RecO.